A 288-amino-acid chain; its full sequence is ATP synthase gamma chain (288 aa).

The protein belongs to the ATPase gamma chain family. In terms of assembly, F-type ATPases have 2 components, CF(1) - the catalytic core - and CF(0) - the membrane proton channel. CF(1) has five subunits: alpha(3), beta(3), gamma(1), delta(1), epsilon(1). CF(0) has three main subunits: a, b and c.

The protein resides in the cell inner membrane. In terms of biological role, produces ATP from ADP in the presence of a proton gradient across the membrane. The gamma chain is believed to be important in regulating ATPase activity and the flow of protons through the CF(0) complex. This Rickettsia bellii (strain OSU 85-389) protein is ATP synthase gamma chain.